Here is a 110-residue protein sequence, read N- to C-terminus: MMEVTAKLRGAAISAQKARLVADLIRGKSVAHALNILNFSNKKAAVLVKKALESAIANAEHNNSLDVDDLKVSTIYVDEGISLKRIMPRAKGRADRITKRTCHITVKVGV.

Belongs to the universal ribosomal protein uL22 family. Part of the 50S ribosomal subunit.

Functionally, this protein binds specifically to 23S rRNA; its binding is stimulated by other ribosomal proteins, e.g. L4, L17, and L20. It is important during the early stages of 50S assembly. It makes multiple contacts with different domains of the 23S rRNA in the assembled 50S subunit and ribosome. In terms of biological role, the globular domain of the protein is located near the polypeptide exit tunnel on the outside of the subunit, while an extended beta-hairpin is found that lines the wall of the exit tunnel in the center of the 70S ribosome. The chain is Large ribosomal subunit protein uL22 from Acinetobacter baylyi (strain ATCC 33305 / BD413 / ADP1).